We begin with the raw amino-acid sequence, 600 residues long: Translation initiation factor IF-2 (600 aa).

Residues 112-279 enclose the tr-type G domain; the sequence is ERAPIITVMG…AINLQAEILE (168 aa). Positions 121-128 are G1; it reads GHVDHGKT. 121–128 is a GTP binding site; it reads GHVDHGKT. The tract at residues 146 to 150 is G2; sequence GITQH. The interval 167 to 170 is G3; it reads DTPG. GTP-binding positions include 167-171 and 221-224; these read DTPGH and NKMD. Positions 221-224 are G4; the sequence is NKMD. The tract at residues 257–259 is G5; sequence SAL.

It belongs to the TRAFAC class translation factor GTPase superfamily. Classic translation factor GTPase family. IF-2 subfamily.

The protein resides in the cytoplasm. In terms of biological role, one of the essential components for the initiation of protein synthesis. Protects formylmethionyl-tRNA from spontaneous hydrolysis and promotes its binding to the 30S ribosomal subunits. Also involved in the hydrolysis of GTP during the formation of the 70S ribosomal complex. This chain is Translation initiation factor IF-2, found in Mycoplasma mobile (strain ATCC 43663 / 163K / NCTC 11711) (Mesomycoplasma mobile).